The primary structure comprises 159 residues: NAD(P)H-quinone oxidoreductase subunit J, chloroplastic (159 aa).

This sequence belongs to the complex I 30 kDa subunit family. NDH is composed of at least 16 different subunits, 5 of which are encoded in the nucleus.

The protein localises to the plastid. The protein resides in the chloroplast thylakoid membrane. The enzyme catalyses a plastoquinone + NADH + (n+1) H(+)(in) = a plastoquinol + NAD(+) + n H(+)(out). It catalyses the reaction a plastoquinone + NADPH + (n+1) H(+)(in) = a plastoquinol + NADP(+) + n H(+)(out). In terms of biological role, NDH shuttles electrons from NAD(P)H:plastoquinone, via FMN and iron-sulfur (Fe-S) centers, to quinones in the photosynthetic chain and possibly in a chloroplast respiratory chain. The immediate electron acceptor for the enzyme in this species is believed to be plastoquinone. Couples the redox reaction to proton translocation, and thus conserves the redox energy in a proton gradient. This Populus trichocarpa (Western balsam poplar) protein is NAD(P)H-quinone oxidoreductase subunit J, chloroplastic.